Consider the following 180-residue polypeptide: UPF0227 protein YcfP (180 aa).

The protein belongs to the UPF0227 family.

This Escherichia coli O139:H28 (strain E24377A / ETEC) protein is UPF0227 protein YcfP.